The primary structure comprises 164 residues: Putative lung carcinoma-associated protein 10 (164 aa).

Positions 1–164 (MSSCPVHDCP…TQKPQTTVGQ (164 aa)) are disordered. Residues 23 to 40 (GSRGALRLRGGAPGSAAG) show a composition bias toward low complexity. The span at 152-164 (MQKTQKPQTTVGQ) shows a compositional bias: polar residues.

This chain is Putative lung carcinoma-associated protein 10 (LCA10), found in Homo sapiens (Human).